The primary structure comprises 318 residues: Polyprenal reductase (318 aa).

Topologically, residues 1–19 (MAPWAAAQLWALNPLRALW) are cytoplasmic. Residues 20–40 (LTLAAAFLLTLLLQLVPPGLL) traverse the membrane as a helical segment. Residues 41 to 80 (PGCALFQDLIRYGKTKREGQSRPAVCRVFDVPKRYFSHFY) lie on the Lumenal side of the membrane. A helical membrane pass occupies residues 81-101 (IISALWNGFLLWHLTQSVFLG). Over 102-119 (VPFPNWLHGLLRILGASQ) the chain is Cytoplasmic. Residues 120-140 (FQGGELALSAFLVLVFLWLHS) form a helical membrane-spanning segment. Topologically, residues 141–156 (LRRLFECFYVSVFSNT) are lumenal. A helical transmembrane segment spans residues 157–177 (VIHIVQYCFGLVYYVLTGLTV). Over 178 to 194 (LSQVPMDGRNAYVIGKN) the chain is Cytoplasmic. A helical membrane pass occupies residues 195 to 215 (LLMQARWFHILGMLMFIWSSV). Residues 216–265 (HQYKCHVILGNLRKNKAGVVIHCNHRIPFGDWFEYVSSPNYLAELMIYIS) lie on the Lumenal side of the membrane. A helical transmembrane segment spans residues 266 to 286 (MAVTFGFHNLTWWLVVTYVFF). Over 287–318 (SQALSAFLSHKFYKSKFVSYPKHRKAFLPFLF) the chain is Cytoplasmic.

This sequence belongs to the steroid 5-alpha reductase family. Polyprenal reductase subfamily.

Its subcellular location is the endoplasmic reticulum membrane. It carries out the reaction a di-trans,poly-cis-dolichal + NADP(+) = a di-trans,poly-cis-polyprenal + NADPH + H(+). It catalyses the reaction a 3-oxo-5alpha-steroid + NADP(+) = a 3-oxo-Delta(4)-steroid + NADPH + H(+). The enzyme catalyses androst-4-ene-3,17-dione + NADPH + H(+) = 5alpha-androstan-3,17-dione + NADP(+). The catalysed reaction is 17beta-hydroxy-5alpha-androstan-3-one + NADP(+) = testosterone + NADPH + H(+). The protein operates within protein modification; protein glycosylation. Functionally, plays a key role in early steps of protein N-linked glycosylation by being involved in the conversion of polyprenol into dolichol. Acts as a polyprenal reductase that mediates the reduction of polyprenal into dolichal in a NADP-dependent mechanism. Dolichols are required for the synthesis of dolichol-linked monosaccharides and the oligosaccharide precursor used for N-glycosylation. Also able to convert testosterone (T) into 5-alpha-dihydrotestosterone (DHT). This is Polyprenal reductase (SRD5A3) from Ailuropoda melanoleuca (Giant panda).